The sequence spans 111 residues: Urease subunit beta (111 aa).

Belongs to the urease beta subunit family. Heterotrimer of UreA (gamma), UreB (beta) and UreC (alpha) subunits. Three heterotrimers associate to form the active enzyme.

The protein resides in the cytoplasm. It carries out the reaction urea + 2 H2O + H(+) = hydrogencarbonate + 2 NH4(+). Its pathway is nitrogen metabolism; urea degradation; CO(2) and NH(3) from urea (urease route): step 1/1. The sequence is that of Urease subunit beta from Geobacillus kaustophilus (strain HTA426).